A 335-amino-acid polypeptide reads, in one-letter code: UPF0353 protein BCG_1543 (335 aa).

Transmembrane regions (helical) follow at residues 18–38 (WFFL…LMQL) and 67–87 (VPAI…AGPT). The region spanning 98–294 (VVMLVIDVSQ…AELRAVYSSL (197 aa)) is the VWFA domain. A helical transmembrane segment spans residues 309–329 (VGWLRLGALALALAALAALLI).

Belongs to the UPF0353 family.

It is found in the cell membrane. The sequence is that of UPF0353 protein BCG_1543 from Mycobacterium bovis (strain BCG / Pasteur 1173P2).